A 356-amino-acid chain; its full sequence is Tyrosine recombinase XerS (356 aa).

One can recognise a Core-binding (CB) domain in the interval 16–121 (IMPWYVLDYY…ALSSLYKYLT (106 aa)). Positions 169 to 354 (AFLDYVDKEY…VNDEQKNALD (186 aa)) constitute a Tyr recombinase domain. Active-site residues include R210, K234, H306, R309, and H332. Y341 functions as the O-(3'-phospho-DNA)-tyrosine intermediate in the catalytic mechanism.

The protein belongs to the 'phage' integrase family. XerS subfamily.

The protein localises to the cytoplasm. FtsK is required for recombination. Site-specific tyrosine recombinase, which acts by catalyzing the cutting and rejoining of the recombining DNA molecules. Essential to convert dimers of the bacterial chromosome into monomers to permit their segregation at cell division. In Streptococcus equi subsp. zooepidemicus (strain H70), this protein is Tyrosine recombinase XerS.